An 889-amino-acid polypeptide reads, in one-letter code: Disease resistance protein UNI (889 aa).

A coiled-coil region spans residues 19–64 (NCLIGKSYIRTLEKNLRALQREMEDLRAIQHEVQNKVARDEARHQR). The disordered stretch occupies residues 131–152 (GNFDEVSQPPPRSEVEERPTQP). Positions 137–440 (SQPPPRSEVE…CEGFIGEDQV (304 aa)) constitute an NB-ARC domain. 179–186 (GMGGVGKT) serves as a coordination point for ATP. 9 LRR repeats span residues 510–532 (WGAV…ESKC), 533–555 (SELT…FIRY), 557–580 (QKLV…ISGL), 581–603 (VSLQ…LKEL), 604–625 (KKLT…GISR), 626–652 (LLSL…LQQL), 653–676 (QNLQ…LAKL), 698–721 (MENL…ESET), and 825–848 (CPKL…EIHM).

Belongs to the disease resistance NB-LRR family. Interacts with RPT2A.

Its function is as follows. Involved in disease resistance via the salicylic acid (SA) signaling pathway. Involved in shoot architecture development via the cytokinin signaling pathway. The sequence is that of Disease resistance protein UNI from Arabidopsis thaliana (Mouse-ear cress).